A 774-amino-acid polypeptide reads, in one-letter code: E3 ubiquitin-protein ligase RFWD3 (774 aa).

Phosphoserine; by ATM and ATR occurs at positions 46 and 63. 3 disordered regions span residues 95-116, 139-225, and 257-280; these read NPRT…PASS, PSSS…AEYG, and GGKT…ASMD. Residues 106–116 show a composition bias toward polar residues; that stretch reads SDGNHTIPASS. A compositionally biased stretch (basic residues) spans 150-162; the sequence is RTRRRVSASRRAR. A compositionally biased stretch (low complexity) spans 211–221; the sequence is SSSSDSDSDSS. An RING-type; degenerate zinc finger spans residues 287–331; that stretch reads CTICLEQWTNAGDHRLSALRCGHLFGYRCISTWLKGQVRKCPQCN. Positions 361 to 413 form a coiled coil; it reads SLLKEQMLRKQAELESAQCRLQLQVLTDKCTRLQRRVQDLQKLTSHQSQNLQQ. WD repeat units follow at residues 495–537, 539–577, and 583–628; these read MHGK…QTYN, GRPV…SHVQ, and KARC…SHWP.

As to quaternary structure, interacts with MDM2 and p53/TP53. Binds to the RPA complex via direct interaction with RPA2. Interacts with RAD51. Phosphorylated at Ser-46 and Ser-63 upon DNA damage by ATM or ATR. ATM phosphorylation occurs at early times upon DNA damage, while ATR is the major kinase at later times. Phosphorylation by ATM and ATR is required to stabilize p53/TP53. Part of the phosphorylation depends upon RPA2 presence.

It is found in the nucleus. The protein resides in the PML body. Its subcellular location is the cytoplasm. The catalysed reaction is S-ubiquitinyl-[E2 ubiquitin-conjugating enzyme]-L-cysteine + [acceptor protein]-L-lysine = [E2 ubiquitin-conjugating enzyme]-L-cysteine + N(6)-ubiquitinyl-[acceptor protein]-L-lysine.. It participates in protein modification; protein ubiquitination. Functionally, E3 ubiquitin-protein ligase required for the repair of DNA interstrand cross-links (ICL) in response to DNA damage. Plays a key role in RPA-mediated DNA damage signaling and repair. Acts by mediating ubiquitination of the RPA complex (RPA1, RPA2 and RPA3 subunits) and RAD51 at stalled replication forks, leading to remove them from DNA damage sites and promote homologous recombination. Also mediates the ubiquitination of p53/TP53 in the late response to DNA damage, and acts as a positive regulator of p53/TP53 stability, thereby regulating the G1/S DNA damage checkpoint. May act by catalyzing the formation of short polyubiquitin chains on p53/TP53 that are not targeted to the proteasome. In response to ionizing radiation, interacts with MDM2 and enhances p53/TP53 ubiquitination, possibly by restricting MDM2 from extending polyubiquitin chains on ubiquitinated p53/TP53. Required to translesion DNA synthesis across DNA-protein cross-link adducts by catalyzing ubiquitination of proteins on single-stranded DNA (ssDNA). This is E3 ubiquitin-protein ligase RFWD3 from Homo sapiens (Human).